Consider the following 483-residue polypeptide: Fructose-like PTS system EIIBC component (483 aa).

The PTS EIIB type-2 domain occupies 1–105 (MESSLRIVAI…IDQIFSELPT (105 aa)). C13 (phosphocysteine intermediate; for EIIB activity) is an active-site residue. Phosphocysteine; by EIIA is present on C13. Positions 128–475 (VMSHLMAGVS…LWLRRKAKAA (348 aa)) constitute a PTS EIIC type-2 domain. 10 helical membrane passes run 132-152 (LMAG…LVAL), 180-200 (IGYL…ASSI), 204-224 (PAFA…LLGT), 227-247 (GAGF…VFWF), 264-284 (LIPF…IGPV), 303-323 (MKFA…GGPI), 344-364 (AIVG…TFIA), 380-400 (IVVG…AAPL), 402-422 (MITA…AFGI), and 442-462 (VGSF…FIIV).

Its subcellular location is the cell inner membrane. It carries out the reaction D-fructose(out) + N(pros)-phospho-L-histidyl-[protein] = D-fructose 1-phosphate(in) + L-histidyl-[protein]. Its function is as follows. The phosphoenolpyruvate-dependent sugar phosphotransferase system (sugar PTS), a major carbohydrate active transport system, catalyzes the phosphorylation of incoming sugar substrates concomitantly with their translocation across the cell membrane. The enzyme II FrvAB PTS system is involved in fructose transport. The polypeptide is Fructose-like PTS system EIIBC component (Escherichia coli (strain K12)).